The primary structure comprises 245 residues: DNA polymerase sliding clamp 2 (245 aa).

The protein belongs to the PCNA family. As to quaternary structure, forms homodimers with PCNA1, which then recruit PCNA3; does not form homotrimers. The heterodimers interact with RfcS homotetramers. Heterotrimer which circularizes head-to-tail (head is at N-terminus, tail is at C-terminus) to form a toroid; DNA passes through its center. Replication factor C (RFC) is required to load the toroid on the DNA. This subunit interacts with DNA polymerase I (dpo1). The heterotrimer also interacts with flap endonuclease 1, DNA ligase and XPF via the other subunits.

In terms of biological role, one of the sliding clamp subunits that acts as a moving platform for DNA processing. Responsible for tethering the catalytic subunit of DNA polymerase to DNA during high-speed replication. Heterotrimer stimulates the Holliday junction resolvase Hjc. DNA polymerase I, DNA ligase and the flap endonuclease may be constitutively associated with the PCNA heterotrimer forming a scanning complex able to couple DNA synthesis and Okazaki fragment maturation. In Saccharolobus solfataricus (strain ATCC 35092 / DSM 1617 / JCM 11322 / P2) (Sulfolobus solfataricus), this protein is DNA polymerase sliding clamp 2.